A 256-amino-acid chain; its full sequence is Flagellar L-ring protein (256 aa).

The first 15 residues, 1–15 (MKKVLAGIVILLLNG), serve as a signal peptide directing secretion. A lipid anchor (N-palmitoyl cysteine) is attached at Cys16. Cys16 carries S-diacylglycerol cysteine lipidation.

Belongs to the FlgH family. The basal body constitutes a major portion of the flagellar organelle and consists of four rings (L,P,S, and M) mounted on a central rod.

The protein localises to the cell outer membrane. Its subcellular location is the bacterial flagellum basal body. Assembles around the rod to form the L-ring and probably protects the motor/basal body from shearing forces during rotation. In Photobacterium profundum (strain SS9), this protein is Flagellar L-ring protein (flgH).